Here is a 238-residue protein sequence, read N- to C-terminus: C-reactive protein (238 aa).

The signal sequence occupies residues 1–16; it reads MERFALWFIFLAGSLA. Glutamine 17 bears the Pyrrolidone carboxylic acid mark. Residues 21-223 form the Pentraxin (PTX) domain; it reads VGNVFLFPKP…QATTQPKRQC (203 aa). An intrachain disulfide couples cysteine 52 to cysteine 113. Positions 76, 77, 154, 155, 156, and 166 each coordinate Ca(2+).

This sequence belongs to the pentraxin family. As to quaternary structure, homodimer; disulfide-linked. It is not known if it assembles into a pentraxin (or pentaxin) structure. Pentaxins have a discoid arrangement of 5 non-covalently bound subunits. Requires Ca(2+) as cofactor. In terms of processing, cys-89 or Cys-223 or Cys-236 could be involved in interchain disulfide linkage.

The protein resides in the secreted. In terms of biological role, displays several functions associated with host defense: it promotes agglutination, bacterial capsular swelling, phagocytosis, and complement fixation through its calcium-dependent binding to phosphorylcholine. The protein is C-reactive protein (crp) of Xenopus laevis (African clawed frog).